A 333-amino-acid polypeptide reads, in one-letter code: Antimicrobial peptides (333 aa).

The N-terminal stretch at 1 to 23 (MVQKGVVFGVLLILFICSTLTSA) is a signal peptide. The tract at residues 23–52 (ADSKPNPTKEEEPAKKPDEVSVKSGGPEVS) is disordered. Positions 24–54 (DSKPNPTKEEEPAKKPDEVSVKSGGPEVSED) are cleaved as a propeptide — acidic peptide 1. Positions 29–43 (PTKEEEPAKKPDEVS) are enriched in basic and acidic residues. The residue at position 55 (glutamine 55) is a Pyrrolidone carboxylic acid. Intrachain disulfides connect cysteine 60-cysteine 70 and cysteine 61-cysteine 74. Residues 75-102 (ANAEEAAAAIPEASEELAQEEAPVYSED) constitute a propeptide, acidic peptide 2. The residue at position 103 (glutamine 103) is a Pyrrolidone carboxylic acid. Cystine bridges form between cysteine 108–cysteine 118 and cysteine 109–cysteine 122. Residues 123 to 148 (QNAEEAAAAIPEATEKAQEAPVYSED) constitute a propeptide, acidic peptide 3. Pyrrolidone carboxylic acid is present on glutamine 149. Cystine bridges form between cysteine 154-cysteine 164 and cysteine 155-cysteine 168. A propeptide spans 169 to 196 (QNAEEAAAAVAIPEASEKAQEGPVYSED) (acidic peptide 4). Glutamine 197 is subject to Pyrrolidone carboxylic acid. 2 cysteine pairs are disulfide-bonded: cysteine 202–cysteine 212 and cysteine 203–cysteine 216. Positions 217–232 (SNAADEVATPEDVEPG) are cleaved as a propeptide — acidic peptide 5. A Pyrrolidone carboxylic acid modification is found at glutamine 233. Cystine bridges form between cysteine 238–cysteine 248 and cysteine 239–cysteine 252. Positions 253–278 (HNAAEEATLKAFEEEAAREQPVYSED) are cleaved as a propeptide — acidic peptide 6. Position 279 is a pyrrolidone carboxylic acid (glutamine 279). Intrachain disulfides connect cysteine 284/cysteine 294 and cysteine 285/cysteine 298. The propeptide at 299-333 (QSAEEAAAFQAGEVTASLMLIMFKACPCMGPVPSV) is acidic peptide 7.

In terms of processing, the N-terminal of all peptides are blocked. Post-translationally, the 4 cysteine residues of all peptides are involved in intrachain disulfide bonds.

The protein localises to the secreted. Its function is as follows. Plays a role in the defense of the germinating seed against microorganisms, by inhibiting the growth of a range of filamentous fungi and bacteria, especially Gram-positive bacteria. Not cytotoxic for cultured human cells and are the smallest known plant-derived antimicrobial peptides. Peptide IB-AMP4 has a higher antifungal activity than IB-AMP1. The sequence is that of Antimicrobial peptides (AMP) from Impatiens balsamina (Balsam).